The sequence spans 90 residues: Large ribosomal subunit protein bL27 (90 aa).

This sequence belongs to the bacterial ribosomal protein bL27 family.

In Paracoccus denitrificans (strain Pd 1222), this protein is Large ribosomal subunit protein bL27.